The following is a 252-amino-acid chain: 2-succinyl-6-hydroxy-2,4-cyclohexadiene-1-carboxylate synthase (252 aa).

Belongs to the AB hydrolase superfamily. MenH family. In terms of assembly, monomer.

It catalyses the reaction 5-enolpyruvoyl-6-hydroxy-2-succinyl-cyclohex-3-ene-1-carboxylate = (1R,6R)-6-hydroxy-2-succinyl-cyclohexa-2,4-diene-1-carboxylate + pyruvate. The protein operates within quinol/quinone metabolism; 1,4-dihydroxy-2-naphthoate biosynthesis; 1,4-dihydroxy-2-naphthoate from chorismate: step 3/7. It functions in the pathway quinol/quinone metabolism; menaquinone biosynthesis. Functionally, catalyzes a proton abstraction reaction that results in 2,5-elimination of pyruvate from 2-succinyl-5-enolpyruvyl-6-hydroxy-3-cyclohexene-1-carboxylate (SEPHCHC) and the formation of 2-succinyl-6-hydroxy-2,4-cyclohexadiene-1-carboxylate (SHCHC). In Escherichia coli O81 (strain ED1a), this protein is 2-succinyl-6-hydroxy-2,4-cyclohexadiene-1-carboxylate synthase.